A 125-amino-acid chain; its full sequence is Large ribosomal subunit protein bL12 (125 aa).

Belongs to the bacterial ribosomal protein bL12 family. In terms of assembly, homodimer. Part of the ribosomal stalk of the 50S ribosomal subunit. Forms a multimeric L10(L12)X complex, where L10 forms an elongated spine to which 2 to 4 L12 dimers bind in a sequential fashion. Binds GTP-bound translation factors.

Functionally, forms part of the ribosomal stalk which helps the ribosome interact with GTP-bound translation factors. Is thus essential for accurate translation. The sequence is that of Large ribosomal subunit protein bL12 from Sinorhizobium medicae (strain WSM419) (Ensifer medicae).